The following is a 200-amino-acid chain: dTTP/UTP pyrophosphatase (200 aa).

Residue Asp72 is the Proton acceptor of the active site.

This sequence belongs to the Maf family. YhdE subfamily. Requires a divalent metal cation as cofactor.

It localises to the cytoplasm. The catalysed reaction is dTTP + H2O = dTMP + diphosphate + H(+). It catalyses the reaction UTP + H2O = UMP + diphosphate + H(+). Functionally, nucleoside triphosphate pyrophosphatase that hydrolyzes dTTP and UTP. May have a dual role in cell division arrest and in preventing the incorporation of modified nucleotides into cellular nucleic acids. The chain is dTTP/UTP pyrophosphatase from Pseudomonas savastanoi pv. phaseolicola (strain 1448A / Race 6) (Pseudomonas syringae pv. phaseolicola (strain 1448A / Race 6)).